Reading from the N-terminus, the 145-residue chain is Small ribosomal subunit protein bS6 (145 aa).

It belongs to the bacterial ribosomal protein bS6 family.

Functionally, binds together with bS18 to 16S ribosomal RNA. The polypeptide is Small ribosomal subunit protein bS6 (Mycoplasmopsis agalactiae (strain NCTC 10123 / CIP 59.7 / PG2) (Mycoplasma agalactiae)).